A 408-amino-acid chain; its full sequence is Peptidase T (408 aa).

His-78 lines the Zn(2+) pocket. Asp-80 is an active-site residue. Asp-140 is a binding site for Zn(2+). Glu-174 functions as the Proton acceptor in the catalytic mechanism. The Zn(2+) site is built by Glu-175, Asp-197, and His-379.

It belongs to the peptidase M20B family. It depends on Zn(2+) as a cofactor.

It localises to the cytoplasm. It carries out the reaction Release of the N-terminal residue from a tripeptide.. Functionally, cleaves the N-terminal amino acid of tripeptides. This chain is Peptidase T, found in Staphylococcus aureus (strain bovine RF122 / ET3-1).